A 190-amino-acid polypeptide reads, in one-letter code: Xanthine phosphoribosyltransferase (190 aa).

Xanthine is bound by residues L20 and N27. Residue 128 to 132 (ANGHA) participates in 5-phospho-alpha-D-ribose 1-diphosphate binding. Residue K156 coordinates xanthine.

Belongs to the purine/pyrimidine phosphoribosyltransferase family. Xpt subfamily. In terms of assembly, homodimer.

It localises to the cytoplasm. The catalysed reaction is XMP + diphosphate = xanthine + 5-phospho-alpha-D-ribose 1-diphosphate. Its pathway is purine metabolism; XMP biosynthesis via salvage pathway; XMP from xanthine: step 1/1. Its function is as follows. Converts the preformed base xanthine, a product of nucleic acid breakdown, to xanthosine 5'-monophosphate (XMP), so it can be reused for RNA or DNA synthesis. The sequence is that of Xanthine phosphoribosyltransferase from Pseudomonas aeruginosa (strain ATCC 15692 / DSM 22644 / CIP 104116 / JCM 14847 / LMG 12228 / 1C / PRS 101 / PAO1).